We begin with the raw amino-acid sequence, 570 residues long: Sulfite reductase [NADPH] hemoprotein beta-component (570 aa).

Cys-434, Cys-440, Cys-479, and Cys-483 together coordinate [4Fe-4S] cluster. A siroheme-binding site is contributed by Cys-483.

This sequence belongs to the nitrite and sulfite reductase 4Fe-4S domain family. Alpha(8)-beta(8). The alpha component is a flavoprotein, the beta component is a hemoprotein. It depends on siroheme as a cofactor. [4Fe-4S] cluster is required as a cofactor.

The enzyme catalyses hydrogen sulfide + 3 NADP(+) + 3 H2O = sulfite + 3 NADPH + 4 H(+). Its pathway is sulfur metabolism; hydrogen sulfide biosynthesis; hydrogen sulfide from sulfite (NADPH route): step 1/1. In terms of biological role, component of the sulfite reductase complex that catalyzes the 6-electron reduction of sulfite to sulfide. This is one of several activities required for the biosynthesis of L-cysteine from sulfate. This is Sulfite reductase [NADPH] hemoprotein beta-component (cysI) from Escherichia coli (strain K12).